Here is a 278-residue protein sequence, read N- to C-terminus: Phosphatidylglycerol--prolipoprotein diacylglyceryl transferase (278 aa).

The next 4 helical transmembrane spans lie at 18 to 38, 55 to 75, 90 to 110, and 115 to 135; these read IQVH…TILA, LILW…VIFE, WDGG…VYLF, and WIPV…AQGI. Arg-137 serves as a coordination point for a 1,2-diacyl-sn-glycero-3-phospho-(1'-sn-glycerol). The next 3 membrane-spanning stretches (helical) occupy residues 177 to 197, 207 to 227, and 237 to 257; these read QPTF…LMSL, GEVF…VEGM, and IRVS…ILVF.

The protein belongs to the Lgt family.

The protein resides in the cell membrane. It carries out the reaction L-cysteinyl-[prolipoprotein] + a 1,2-diacyl-sn-glycero-3-phospho-(1'-sn-glycerol) = an S-1,2-diacyl-sn-glyceryl-L-cysteinyl-[prolipoprotein] + sn-glycerol 1-phosphate + H(+). Its pathway is protein modification; lipoprotein biosynthesis (diacylglyceryl transfer). Functionally, catalyzes the transfer of the diacylglyceryl group from phosphatidylglycerol to the sulfhydryl group of the N-terminal cysteine of a prolipoprotein, the first step in the formation of mature lipoproteins. The chain is Phosphatidylglycerol--prolipoprotein diacylglyceryl transferase from Pediococcus pentosaceus (strain ATCC 25745 / CCUG 21536 / LMG 10740 / 183-1w).